Here is a 104-residue protein sequence, read N- to C-terminus: Large ribosomal subunit protein uL24 (104 aa).

The protein belongs to the universal ribosomal protein uL24 family. In terms of assembly, part of the 50S ribosomal subunit.

One of two assembly initiator proteins, it binds directly to the 5'-end of the 23S rRNA, where it nucleates assembly of the 50S subunit. In terms of biological role, one of the proteins that surrounds the polypeptide exit tunnel on the outside of the subunit. The protein is Large ribosomal subunit protein uL24 of Saccharopolyspora erythraea (strain ATCC 11635 / DSM 40517 / JCM 4748 / NBRC 13426 / NCIMB 8594 / NRRL 2338).